A 354-amino-acid chain; its full sequence is P2Y purinoceptor 13 (354 aa).

Over 1–49 the chain is Extracellular; that stretch reads MTAAIRRQRELSILPKVTLEAMNTTVMQGFNRSERCPRDTRIVQLVFPA. N-linked (GlcNAc...) asparagine glycosylation is found at Asn-23 and Asn-31. Residues 50 to 70 traverse the membrane as a helical segment; the sequence is LYTVVFLTGILLNTLALWVFV. At 71–77 the chain is on the cytoplasmic side; it reads HIPSSST. Residues 78-98 traverse the membrane as a helical segment; that stretch reads FIIYLKNTLVADLIMTLMLPF. The Extracellular segment spans residues 99-117; it reads KILSDSHLAPWQLRAFVCR. Cysteines 116 and 194 form a disulfide. A helical membrane pass occupies residues 118–138; that stretch reads FSSVIFYETMYVGIVLLGLIA. The Cytoplasmic segment spans residues 139-161; sequence FDRFLKIIRPLRNIFLKKPVFAK. Residues 162–182 traverse the membrane as a helical segment; it reads TVSIFIWFFLFFISLPNTILS. Topologically, residues 183 to 211 are extracellular; sequence NKEATPSSVKKCASLKGPLGLKWHQMVNN. A helical membrane pass occupies residues 212-232; that stretch reads ICQFIFWTVFILMLVFYVVIA. The Cytoplasmic segment spans residues 233–252; that stretch reads KKVYDSYRKSKSKDRKNNKK. The helical transmembrane segment at 253-273 threads the bilayer; it reads LEGKVFVVVAVFFVCFAPFHF. Residues 274–300 are Extracellular-facing; the sequence is ARVPYTHSQTNNKTDCRLQNQLFIAKE. N-linked (GlcNAc...) asparagine glycosylation occurs at Asn-285. Residues 301–321 form a helical membrane-spanning segment; that stretch reads TTLFLAATNICMDPLIYIFLC. Residues 322–333 are Cytoplasmic-facing; the sequence is KKFTEKLPCMQG. Residues 335–354 are disordered; the sequence is KTTASSQENHSSQTDNITLG.

The protein belongs to the G-protein coupled receptor 1 family. As to expression, strong expression in spleen and adult brain. Lower expression in placenta, lung, liver, spinal cord, thymus, small intestine, uterus, stomach, testis, fetal brain, and adrenal gland. Not detected in pancreas, heart, kidney, skeletal muscle, ovary or fetal aorta. Clearly detected in lymph node and bone marrow, weakly detected in peripheral blood mononuclear cells (PBMC) and in peripheral blood leukocytes (PBL), but not detected in polymorphonuclear cells (PMN). In the brain, detected in all brain regions examined.

The protein localises to the cell membrane. Its function is as follows. Receptor for ADP. Coupled to G(i)-proteins. May play a role in hematopoiesis and the immune system. The sequence is that of P2Y purinoceptor 13 (P2RY13) from Homo sapiens (Human).